Here is a 1120-residue protein sequence, read N- to C-terminus: Transcription-repair-coupling factor (1120 aa).

Residues 591 to 756 (DLTNGMLMDR…MTGLKELSII (166 aa)) enclose the Helicase ATP-binding domain. 604–611 (GDVGFGKT) contributes to the ATP binding site. A DEEQ box motif is present at residues 709 to 712 (DEEQ). One can recognise a Helicase C-terminal domain in the interval 777–933 (IIRDALLREH…TIASHDADLR (157 aa)).

This sequence in the N-terminal section; belongs to the UvrB family. In the C-terminal section; belongs to the helicase family. RecG subfamily.

It is found in the cytoplasm. In terms of biological role, couples transcription and DNA repair by recognizing RNA polymerase (RNAP) stalled at DNA lesions. Mediates ATP-dependent release of RNAP and its truncated transcript from the DNA, and recruitment of nucleotide excision repair machinery to the damaged site. The protein is Transcription-repair-coupling factor of Rickettsia prowazekii (strain Madrid E).